The chain runs to 719 residues: Phosphoribosylformylglycinamidine synthase subunit PurL (719 aa).

The active site involves His47. Tyr50 and Lys89 together coordinate ATP. Glu91 provides a ligand contact to Mg(2+). Residues 92–95 (SHNH) and Arg114 each bind substrate. Residue His93 is the Proton acceptor of the active site. Position 115 (Asp115) interacts with Mg(2+). Residue Gln238 coordinates substrate. A Mg(2+)-binding site is contributed by Asp266. Position 310–312 (310–312 (ESQ)) interacts with substrate. Residues Asp488 and Gly525 each contribute to the ATP site. Asn526 contacts Mg(2+). Ser528 is a binding site for substrate.

It belongs to the FGAMS family. Monomer. Part of the FGAM synthase complex composed of 1 PurL, 1 PurQ and 2 PurS subunits.

The protein localises to the cytoplasm. The catalysed reaction is N(2)-formyl-N(1)-(5-phospho-beta-D-ribosyl)glycinamide + L-glutamine + ATP + H2O = 2-formamido-N(1)-(5-O-phospho-beta-D-ribosyl)acetamidine + L-glutamate + ADP + phosphate + H(+). Its pathway is purine metabolism; IMP biosynthesis via de novo pathway; 5-amino-1-(5-phospho-D-ribosyl)imidazole from N(2)-formyl-N(1)-(5-phospho-D-ribosyl)glycinamide: step 1/2. Its function is as follows. Part of the phosphoribosylformylglycinamidine synthase complex involved in the purines biosynthetic pathway. Catalyzes the ATP-dependent conversion of formylglycinamide ribonucleotide (FGAR) and glutamine to yield formylglycinamidine ribonucleotide (FGAM) and glutamate. The FGAM synthase complex is composed of three subunits. PurQ produces an ammonia molecule by converting glutamine to glutamate. PurL transfers the ammonia molecule to FGAR to form FGAM in an ATP-dependent manner. PurS interacts with PurQ and PurL and is thought to assist in the transfer of the ammonia molecule from PurQ to PurL. The chain is Phosphoribosylformylglycinamidine synthase subunit PurL from Ruegeria pomeroyi (strain ATCC 700808 / DSM 15171 / DSS-3) (Silicibacter pomeroyi).